The following is a 215-amino-acid chain: Pyrrolidone-carboxylate peptidase (215 aa).

Residues glutamate 80, cysteine 143, and histidine 167 contribute to the active site.

It belongs to the peptidase C15 family. As to quaternary structure, homotetramer.

It localises to the cytoplasm. The catalysed reaction is Release of an N-terminal pyroglutamyl group from a polypeptide, the second amino acid generally not being Pro.. Removes 5-oxoproline from various penultimate amino acid residues except L-proline. This chain is Pyrrolidone-carboxylate peptidase, found in Bacillus cereus (strain ZK / E33L).